Reading from the N-terminus, the 215-residue chain is Probable transaldolase (215 aa).

The active-site Schiff-base intermediate with substrate is the Lys-84.

This sequence belongs to the transaldolase family. Type 3B subfamily.

It localises to the cytoplasm. It catalyses the reaction D-sedoheptulose 7-phosphate + D-glyceraldehyde 3-phosphate = D-erythrose 4-phosphate + beta-D-fructose 6-phosphate. It participates in carbohydrate degradation; pentose phosphate pathway; D-glyceraldehyde 3-phosphate and beta-D-fructose 6-phosphate from D-ribose 5-phosphate and D-xylulose 5-phosphate (non-oxidative stage): step 2/3. Its function is as follows. Transaldolase is important for the balance of metabolites in the pentose-phosphate pathway. The polypeptide is Probable transaldolase (Exiguobacterium sibiricum (strain DSM 17290 / CCUG 55495 / CIP 109462 / JCM 13490 / 255-15)).